Consider the following 336-residue polypeptide: Ketoreductase adrE (336 aa).

Tyr-171 contacts NADP(+).

Belongs to the NAD(P)-dependent epimerase/dehydratase family. Dihydroflavonol-4-reductase subfamily.

The protein operates within secondary metabolite biosynthesis; terpenoid biosynthesis. Its function is as follows. Ketoreductase; part of the gene cluster that mediates the biosynthesis of andrastins, meroterpenoid compounds that exhibit inhibitory activity against ras farnesyltransferase, suggesting that they could be promising leads for antitumor agents. The first step of the pathway is the synthesis of 3,5-dimethylorsellinic acid (DMOA) by the polyketide synthase adrD via condensation of one acetyl-CoA starter unit with 3 malonyl-CoA units and 2 methylations. DMAO is then converted to farnesyl-DMAO by the prenyltransferase adrG. The methyltransferase adrK catalyzes the methylation of the carboxyl group of farnesyl-DMAO to farnesyl-DMAO methyl ester which is further converted to epoxyfarnesyl-DMAO methyl ester by the FAD-dependent monooxygenase adrH. The terpene cyclase adrI then catalyzes the carbon skeletal rearrangement to generate the andrastin E, the first compound in the pathway having the andrastin scaffold, with the tetracyclic ring system. The post-cyclization tailoring enzymes adrF, adrE, adrJ, and adrA, are involved in the conversion of andrastin E into andrastin A. The short chain dehydrogenase adrF is responsible for the oxidation of the C-3 a hydroxyl group of andrastin E to yield the corresponding ketone, andrastin D. The ketoreductase adrE stereoselectively reduces the carbonyl moiety to reverse the stereochemistry of the C-3 position to yield andrastin F. The acetyltransferase adrJ is the acetyltransferase that attaches the acetyl group to the C-3 hydroxyl group of andrastin F to yield andrastin C. Finally, the cytochrome P450 monooxygenase adrA catalyzes two sequential oxidation reactions of the C-23 methyl group, to generate the corresponding alcohol andrastin B, and aldehyde andrastin A. The polypeptide is Ketoreductase adrE (Penicillium roqueforti).